The chain runs to 199 residues: Small ribosomal subunit protein uS2 (199 aa).

The protein belongs to the universal ribosomal protein uS2 family.

This Thermoplasma acidophilum (strain ATCC 25905 / DSM 1728 / JCM 9062 / NBRC 15155 / AMRC-C165) protein is Small ribosomal subunit protein uS2 (rps2).